Reading from the N-terminus, the 435-residue chain is MFILTMGLNHHTAPIDIREKLVFKETEEEMALVTLQQEKSILENVIISTCNRTEIVAVVDQIHTGRYYLKRFMANWFQMDMEKIEPYLFFHEETEAVNHLYKVTAGLDSLVLGETQILGQVKHAFEIAKQTETTGTLLNKLFREVVTFAKKVHHHTKINENAVSVSYAAVEVAKKLYGSLDNKKIVLVGAGEMSELALQNLAGSGIADITIINRTKSNAELLANQFQAKVGAYENMNEHLMLADIVLVSTSATEPIIKQAAMQDLMEQKASSMLVIDIGLPRNVEHDCSYIPNFHLYDIDDLAGVVSANSLERQRIVLELENTIEVEVRNFFEWEKQLGVVPVIRALREKALDMQEVAMTSLENKLPGLTEREYIQIGKHMKSIINQMLKQPISELKEMSVEEDATTSIEHFKRIFGLSETDVTVIEKEQAETRS.

Substrate is bound by residues 49-52, serine 109, 114-116, and glutamine 120; these read TCNR and ETQ. Cysteine 50 (nucleophile) is an active-site residue. NADP(+) is bound at residue 189–194; sequence GAGEMS.

The protein belongs to the glutamyl-tRNA reductase family. Homodimer.

It carries out the reaction (S)-4-amino-5-oxopentanoate + tRNA(Glu) + NADP(+) = L-glutamyl-tRNA(Glu) + NADPH + H(+). Its pathway is porphyrin-containing compound metabolism; protoporphyrin-IX biosynthesis; 5-aminolevulinate from L-glutamyl-tRNA(Glu): step 1/2. Catalyzes the NADPH-dependent reduction of glutamyl-tRNA(Glu) to glutamate 1-semialdehyde (GSA). The polypeptide is Glutamyl-tRNA reductase (Listeria monocytogenes serovar 1/2a (strain ATCC BAA-679 / EGD-e)).